The following is a 192-amino-acid chain: MIEEIKSQIHSHQKVMESIGQELSPKIAAVVELLADALGNGKKLLVMGNGGSAADAQHLVAELVGRFKMERRGLPAIALTTDTSILTAIGNDYGFENIFSRQIEALARPGDVVVGISTSGTSKNVYKALLVADELGCRTIGLLGRDGGTIAEIVDVPITVPCDDTPRVQEGHITIIHILCDLLEKRLFGERR.

In terms of domain architecture, SIS spans 34 to 192 (LADALGNGKK…LEKRLFGERR (159 aa)). Residue 49–51 (NGG) participates in substrate binding. 2 residues coordinate Zn(2+): His58 and Glu62. Residues Glu62, 91-92 (ND), 117-119 (STS), Ser122, and Gln169 contribute to the substrate site. 2 residues coordinate Zn(2+): Gln169 and His177.

It belongs to the SIS family. GmhA subfamily. As to quaternary structure, homotetramer. Zn(2+) is required as a cofactor.

The protein resides in the cytoplasm. The catalysed reaction is 2 D-sedoheptulose 7-phosphate = D-glycero-alpha-D-manno-heptose 7-phosphate + D-glycero-beta-D-manno-heptose 7-phosphate. It participates in carbohydrate biosynthesis; D-glycero-D-manno-heptose 7-phosphate biosynthesis; D-glycero-alpha-D-manno-heptose 7-phosphate and D-glycero-beta-D-manno-heptose 7-phosphate from sedoheptulose 7-phosphate: step 1/1. Its function is as follows. Catalyzes the isomerization of sedoheptulose 7-phosphate in D-glycero-D-manno-heptose 7-phosphate. This is Phosphoheptose isomerase from Geotalea daltonii (strain DSM 22248 / JCM 15807 / FRC-32) (Geobacter daltonii).